Reading from the N-terminus, the 427-residue chain is MQKNITKVSDTEQELEIILTAEEYGTEYNQELDEAKRTIQVKGFRKGHVPTGLIKKLAGPAIEASVAEKMASKHFGTIVDEEKIKPASRAQIESVSYEGDELKIKLSYEIHPVFELNNYSDYTFTKARYTITDEDVQKEIDLILKGHGSLATVDEAALGTDTVIGDVEKLDAAGEPEEGGKTENHHFNLEYLPEDNPFRISLEGAKAGETVNVATTQKDPNTPVVSYRITVKEVKRLELPELTDDLVKEITRQRFETVADFTADVRIQLEEHFGMKSDEELLESISSKLIEENPVSTPKSMVASFANMLVENAKRQFGGKFPKGFDESQFTESIIPNAEKHARWLLISQKIAELNNVEVTDEDIKTYAEKEAEKSTPEQKEEIMSTYQSTEFRDYIADTIIKDKIYDIIKSQVTITEEPTPVPVHKA.

A PPIase FKBP-type domain is found at 160–240 (TDTVIGDVEK…VKEVKRLELP (81 aa)).

The protein belongs to the FKBP-type PPIase family. Tig subfamily.

It is found in the cytoplasm. The catalysed reaction is [protein]-peptidylproline (omega=180) = [protein]-peptidylproline (omega=0). Its function is as follows. Involved in protein export. Acts as a chaperone by maintaining the newly synthesized protein in an open conformation. Functions as a peptidyl-prolyl cis-trans isomerase. In Chlorobium phaeobacteroides (strain DSM 266 / SMG 266 / 2430), this protein is Trigger factor.